Consider the following 122-residue polypeptide: Large ribosomal subunit protein uL14c (122 aa).

The protein belongs to the universal ribosomal protein uL14 family. In terms of assembly, part of the 50S ribosomal subunit.

It is found in the plastid. The protein resides in the chloroplast. Its function is as follows. Binds to 23S rRNA. The sequence is that of Large ribosomal subunit protein uL14c from Chloranthus spicatus (Chulantree).